The following is a 46-amino-acid chain: Bottromycin D (46 aa).

A propeptide spanning residues 10-46 is cleaved from the precursor; the sequence is MTADFLNDDPNNAELSSLEMEELESWGAWSDDTDQSV.

Post-translationally, the precursor peptide is first ribosomally synthesized and then highly tailored by specific enzymes to yield the final natural product. These modifications include several methylations, cyclization and the formation of t-Leu and Thia-beta-Ala residues.

Its subcellular location is the secreted. Functionally, bottromycin D is a ribosomally synthesized and post-translationally modified peptide (RiPP) that displays antibiotic activity against methicillin-resistant S.aureus (MRSA). In Streptomyces sp, this protein is Bottromycin D.